The primary structure comprises 449 residues: MMTVAAEIRGSNPEKLLAPVLSAFWDEDESWTLDVYRRHEGYEGLRKALAMAPDDLIAYVKESGLRGRGGAGFPTGMKWQFIPQGDGKPHYLVVNADESEPGTCKDIPLLFANPHSLIEGIVIACYAIRSSHAFIYLRGEVVPVLRRLHEAVREAYAAGFLGENILGSGLDLTLTVHAGAGAYICGEETALLDSLEGRRGQPRLRPPFPAVAGLYACPTVVNNVESIASVPAILNKGKDWFRSMGSEKSPGFTLYSLSGHVAGPGQYEAPLGITLRQLLDMSGGMRPGHRLKFWTPGGSSTPMFTDEHLDVPLDYEGVGAAGSMLGTKALQCFDETTCVVRAVTRWTEFYAHESCGKCTPCREGTYWLVQLLRDIEAGKGQMSDLDKLNDIADNINGKSFCALGDGAASPIFSSLKYFREEYEEHITGRGCPFDPAKSTAWADRTEVKA.

67–76 (GRGGAGFPTG) is a binding site for NAD(+). Residue 179–226 (GAGAYICGEETALLDSLEGRRGQPRLRPPFPAVAGLYACPTVVNNVES) coordinates FMN. [4Fe-4S] cluster is bound by residues Cys355, Cys358, Cys361, and Cys401.

It belongs to the complex I 51 kDa subunit family. It depends on FMN as a cofactor. Requires [4Fe-4S] cluster as cofactor.

The catalysed reaction is a quinone + NADH + 5 H(+)(in) = a quinol + NAD(+) + 4 H(+)(out). Its function is as follows. NDH-1 shuttles electrons from NADH, via FMN and iron-sulfur (Fe-S) centers, to quinones in the respiratory chain. Couples the redox reaction to proton translocation (for every two electrons transferred, four hydrogen ions are translocated across the cytoplasmic membrane), and thus conserves the redox energy in a proton gradient. In Streptomyces coelicolor (strain ATCC BAA-471 / A3(2) / M145), this protein is NADH-quinone oxidoreductase subunit F (nuoF).